A 236-amino-acid polypeptide reads, in one-letter code: Ubiquinone biosynthesis O-methyltransferase (236 aa).

Residues Arg-39, Gly-59, Asp-80, and Met-124 each contribute to the S-adenosyl-L-methionine site.

It belongs to the methyltransferase superfamily. UbiG/COQ3 family.

It carries out the reaction a 3-demethylubiquinol + S-adenosyl-L-methionine = a ubiquinol + S-adenosyl-L-homocysteine + H(+). The catalysed reaction is a 3-(all-trans-polyprenyl)benzene-1,2-diol + S-adenosyl-L-methionine = a 2-methoxy-6-(all-trans-polyprenyl)phenol + S-adenosyl-L-homocysteine + H(+). Its pathway is cofactor biosynthesis; ubiquinone biosynthesis. In terms of biological role, O-methyltransferase that catalyzes the 2 O-methylation steps in the ubiquinone biosynthetic pathway. The sequence is that of Ubiquinone biosynthesis O-methyltransferase from Shewanella sp. (strain W3-18-1).